A 61-amino-acid chain; its full sequence is MTNMKSVEAYQQLDNQNLKKVVGGKYYGNGVHCTKSGCSVNWGEAASAGIHRLANGGNGFW.

The first 24 residues, 1–24 (MTNMKSVEAYQQLDNQNLKKVVGG), serve as a signal peptide directing secretion. Cys-33 and Cys-38 are oxidised to a cystine.

It belongs to the bacteriocin class IIA/YGNGV family.

Its subcellular location is the secreted. Its function is as follows. Bacteriocin active against Listeria monocytogenes. The chain is Bacteriocin mesentericin Y105 (mesY) from Leuconostoc mesenteroides.